The following is a 270-amino-acid chain: 25S rRNA adenine-N(1) methyltransferase (270 aa).

Positions 111 and 131 each coordinate S-adenosyl-L-methionine.

This sequence belongs to the BMT2 family.

The protein localises to the nucleus. Its subcellular location is the nucleolus. In terms of biological role, S-adenosyl-L-methionine-dependent methyltransferase that specifically methylates the N(1) position of an adenine present in helix 65 in 25S rRNA. In Schizosaccharomyces pombe (strain 972 / ATCC 24843) (Fission yeast), this protein is 25S rRNA adenine-N(1) methyltransferase.